A 430-amino-acid chain; its full sequence is uncharacterized protein (430 aa).

The protein localises to the cytoplasm. It localises to the nucleus. This is an uncharacterized protein from Schizosaccharomyces pombe (strain 972 / ATCC 24843) (Fission yeast).